The sequence spans 206 residues: Large ribosomal subunit protein mL62 (206 aa).

The N-terminal 29 residues, 1-29 (MAATRCLRWGLSRAGVWLLPPPARCPRRA), are a transit peptide targeting the mitochondrion. Gln90 is modified (N5-methylglutamine).

It belongs to the prokaryotic/mitochondrial release factor family. Mitochondrion-specific ribosomal protein mL62 subfamily. Component of the mitochondrial large ribosomal subunit (mt-LSU). Mature mammalian 55S mitochondrial ribosomes consist of a small (28S) and a large (39S) subunit. The 28S small subunit contains a 12S ribosomal RNA (12S mt-rRNA) and 30 different proteins. The 39S large subunit contains a 16S rRNA (16S mt-rRNA), a copy of mitochondrial valine transfer RNA (mt-tRNA(Val)), which plays an integral structural role, and 52 different proteins. In terms of processing, methylation of glutamine in the GGQ triplet by HEMK1. As to expression, down-regulated during the in vitro differentiation of HT29-D4 colon carcinoma cells.

Its subcellular location is the mitochondrion. The enzyme catalyses an N-acyl-L-alpha-aminoacyl-tRNA + H2O = an N-acyl-L-amino acid + a tRNA + H(+). In terms of biological role, essential peptidyl-tRNA hydrolase component of the mitochondrial large ribosomal subunit. Acts as a codon-independent translation release factor that has lost all stop codon specificity and directs the termination of translation in mitochondrion, possibly in case of abortive elongation. Involved in the hydrolysis of peptidyl-tRNAs that have been prematurely terminated and thus in the recycling of stalled mitochondrial ribosomes. The polypeptide is Large ribosomal subunit protein mL62 (Homo sapiens (Human)).